The chain runs to 1181 residues: Protein P1-P2 (1181 aa).

An N-terminal signal peptide occupies residues 1 to 33 (MASFLKPVNSQGLWLSLLLAITYLFLLPSAGQS). The next 4 membrane-spanning stretches (helical) occupy residues 172–192 (LIEF…VYVA), 194–214 (AVPG…WAWP), 218–235 (ASSL…IGFL), and 240–260 (IGLI…WSLL). The 198-residue stretch at 318–515 (IPGVQIKKLR…SSSPKFTGCE (198 aa)) folds into the Peptidase S39 domain. Catalysis depends on for protease activity residues His366, Asp396, and Ser465. The tract at residues 572–688 (GLWADDTEDD…SCESSPHRPT (117 aa)) is disordered. 2 stretches are compositionally biased toward basic and acidic residues: residues 598–608 (GETKSSEDPLP) and 638–648 (EESRQPQEEKG). The span at 649-677 (QSCQEDSLNSTQEIQGQSTHFVPSSGTGR) shows a compositional bias: polar residues. The RdRp catalytic domain occupies 979–1094 (RYLTPTDCSG…SVGSDLSQYA (116 aa)).

Belongs to the luteoviruses RNA polymerase family. Post-translationally, specific enzymatic cleavages in vivo yield mature proteins. The protease probably cleaves itself and releases the RdRp (Potential). Cleavages have been shown in the P1 protein, but since the N-terminus containing the serine protease is shared between P1 and P1-P2, cleavages should also occur within the P1-P2 protein.

The protein resides in the membrane. It catalyses the reaction RNA(n) + a ribonucleoside 5'-triphosphate = RNA(n+1) + diphosphate. In terms of biological role, RNA-dependent RNA polymerase that plays an essential role in virus replication. This chain is Protein P1-P2, found in Cicer arietinum (Chickpea).